The sequence spans 342 residues: 6-hydroxytryprostatin B O-methyltransferase (342 aa).

Asp-201 provides a ligand contact to S-adenosyl-L-methionine. His-244 functions as the Proton acceptor in the catalytic mechanism.

Belongs to the class I-like SAM-binding methyltransferase superfamily. Cation-independent O-methyltransferase family. As to quaternary structure, homodimer.

It catalyses the reaction 6-hydroxytryprostatin B + S-adenosyl-L-methionine = tryprostatin A + S-adenosyl-L-homocysteine + H(+). Its pathway is mycotoxin biosynthesis. 6-hydroxytryprostatin B O-methyltransferase; part of the gene cluster that mediates the biosynthesis of fumitremorgins, indole alkaloids that carry not only intriguing chemical structures, but also interesting biological and pharmacological activities. The biosynthesis of fumitremorgin-type alkaloids begins by condensation of the two amino acids L-tryptophan and L-proline to brevianamide F, catalyzed by the non-ribosomal peptide synthetase ftmA. Brevianamide F is then prenylated by the prenyltransferase ftmPT1/ftmB in the presence of dimethylallyl diphosphate, resulting in the formation of tryprostatin B. The three cytochrome P450 monooxygenases, ftmP450-1/ftmC, ftmP450-2/ftmE and ftmP450-3/FtmG, are responsible for the conversion of tryprostatin B to 6-hydroxytryprostatin B, tryprostatin A to fumitremorgin C and fumitremorgin C to 12,13-dihydroxyfumitremorgin C, respectively. The putative methyltransferase ftmMT/ftmD is expected for the conversion of 6-hydroxytryprostatin B to tryprostatin A. FtmPT2/FtmH catalyzes the prenylation of 12,13-dihydroxyfumitre-morgin C in the presence of dimethylallyl diphosphate, resulting in the formation of fumitremorgin B. Fumitremorgin B is further converted to verruculogen by ftmOx1/ftmF via the insertion of an endoperoxide bond between the two prenyl moieties. In some fungal species, verruculogen is further converted to fumitremorgin A, but the enzymes involved in this step have not been identified yet. In Aspergillus fumigatus (strain ATCC MYA-4609 / CBS 101355 / FGSC A1100 / Af293) (Neosartorya fumigata), this protein is 6-hydroxytryprostatin B O-methyltransferase.